The following is a 417-amino-acid chain: NADH-quinone oxidoreductase subunit D (417 aa).

The protein belongs to the complex I 49 kDa subunit family. As to quaternary structure, NDH-1 is composed of 14 different subunits. Subunits NuoB, C, D, E, F, and G constitute the peripheral sector of the complex.

It is found in the cell inner membrane. It catalyses the reaction a quinone + NADH + 5 H(+)(in) = a quinol + NAD(+) + 4 H(+)(out). Its function is as follows. NDH-1 shuttles electrons from NADH, via FMN and iron-sulfur (Fe-S) centers, to quinones in the respiratory chain. The immediate electron acceptor for the enzyme in this species is believed to be ubiquinone. Couples the redox reaction to proton translocation (for every two electrons transferred, four hydrogen ions are translocated across the cytoplasmic membrane), and thus conserves the redox energy in a proton gradient. The polypeptide is NADH-quinone oxidoreductase subunit D (Acidithiobacillus ferrooxidans (strain ATCC 53993 / BNL-5-31) (Leptospirillum ferrooxidans (ATCC 53993))).